We begin with the raw amino-acid sequence, 807 residues long: Histone transcription regulator slm9 (807 aa).

WD repeat units follow at residues 62 to 100 (SFDS…KAFQ) and 102 to 140 (LSGP…ETIV). Residues 144–164 (EHADSNHQPAVSIEESKEAVE) form a disordered region. 4 WD repeats span residues 182-221 (GHHT…VEKS), 230-273 (PTGN…YDIN), 276-322 (GHQG…PMAV), and 326-367 (LSCS…EKMD). The disordered stretch occupies residues 388–437 (NKNAAADRTTSPTQGQPESPSKSILLRPPPSIASSPESKRRKCPKKFVAR). Residues 395-409 (RTTSPTQGQPESPSK) are compositionally biased toward polar residues. 3 positions are modified to phosphoserine: Ser406, Ser421, and Ser422. Basic residues predominate over residues 426–435 (KRRKCPKKFV). WD repeat units lie at residues 492–526 (DCSW…YIYS) and 528–574 (AGRL…AIHS).

Belongs to the WD repeat HIR1 family. Interacts with hip1 and hip3.

It is found in the cytoplasm. The protein resides in the nucleus. Probably required for replication-independent chromatin assembly. Required for transcriptional silencing in the outer repeat (otr) centromeric repeats and the Tf2 long terminal repeat retrotransposons. May play an indirect role in the regulation of cdc2 and/or wee1 at the G2/M stage of mitosis. The sequence is that of Histone transcription regulator slm9 (slm9) from Schizosaccharomyces pombe (strain 972 / ATCC 24843) (Fission yeast).